A 359-amino-acid polypeptide reads, in one-letter code: MSKVCIIGTTTWGITLGTIIAHKGREVMLWARTEDEAVLLSTQRRPADFLPENYHFPEFMNVTASLEEAIAGADMVLLAVPSQRMRPNIRLVAPLLTKSMLICSAAKGLEIGTAKRMSQVITDEISPDFAKNICVLSGPNLAMEILKGLPAVTVLAADTEKTAKKAAKLITAANFSAYTNTDIIGVELGGSLKNIIALGAGIVDGLNLGNNAKSALITRGLTEISALGAALGANPLTLSGLAGLGDLIATCSSNLSRNHFVGVELTKGRSLNDIMYNMSNVAEGVSTTAVAYEMARSMDLEMPVTENIYNVLYNNADPKEAARILMDAQATHELAGRKWNLFKMFRKRKARKTPELNPD.

The NADPH site is built by T11, W12, R32, and K107. Positions 107 and 138 each coordinate sn-glycerol 3-phosphate. A142 lines the NADPH pocket. K193, D246, S256, R257, and N258 together coordinate sn-glycerol 3-phosphate. The active-site Proton acceptor is the K193. R257 contacts NADPH. NADPH-binding residues include V281 and E283.

The protein belongs to the NAD-dependent glycerol-3-phosphate dehydrogenase family.

It localises to the cytoplasm. The catalysed reaction is sn-glycerol 3-phosphate + NAD(+) = dihydroxyacetone phosphate + NADH + H(+). It catalyses the reaction sn-glycerol 3-phosphate + NADP(+) = dihydroxyacetone phosphate + NADPH + H(+). It participates in membrane lipid metabolism; glycerophospholipid metabolism. In terms of biological role, catalyzes the reduction of the glycolytic intermediate dihydroxyacetone phosphate (DHAP) to sn-glycerol 3-phosphate (G3P), the key precursor for phospholipid synthesis. In Dehalococcoides mccartyi (strain ATCC BAA-2100 / JCM 16839 / KCTC 5957 / BAV1), this protein is Glycerol-3-phosphate dehydrogenase [NAD(P)+].